The following is a 267-amino-acid chain: Octanoyltransferase (267 aa).

The 189-residue stretch at 77 to 265 folds into the BPL/LPL catalytic domain; it reads GTASELVWLV…AFESVFGPRQ (189 aa). Residues 116-123, 196-198, and 209-211 contribute to the substrate site; these read RGGEYTYH, AIG, and GIA. Residue cysteine 227 is the Acyl-thioester intermediate of the active site.

It belongs to the LipB family.

It localises to the cytoplasm. The catalysed reaction is octanoyl-[ACP] + L-lysyl-[protein] = N(6)-octanoyl-L-lysyl-[protein] + holo-[ACP] + H(+). The protein operates within protein modification; protein lipoylation via endogenous pathway; protein N(6)-(lipoyl)lysine from octanoyl-[acyl-carrier-protein]: step 1/2. In terms of biological role, catalyzes the transfer of endogenously produced octanoic acid from octanoyl-acyl-carrier-protein onto the lipoyl domains of lipoate-dependent enzymes. Lipoyl-ACP can also act as a substrate although octanoyl-ACP is likely to be the physiological substrate. This Brucella suis biovar 1 (strain 1330) protein is Octanoyltransferase.